We begin with the raw amino-acid sequence, 493 residues long: Probable mannosyl-oligosaccharide alpha-1,2-mannosidase 1B (493 aa).

Residues 1–18 (MHLPSLSVALALVSSSLA) form the signal peptide. 2 N-linked (GlcNAc...) asparagine glycosylation sites follow: N87 and N174. Cysteines 324 and 353 form a disulfide. E367 functions as the Proton donor in the catalytic mechanism. N489 is a glycosylation site (N-linked (GlcNAc...) asparagine).

This sequence belongs to the glycosyl hydrolase 47 family. In terms of assembly, monomer. Requires Ca(2+) as cofactor. Mg(2+) is required as a cofactor.

It localises to the cytoplasmic vesicle lumen. The catalysed reaction is N(4)-(alpha-D-Man-(1-&gt;2)-alpha-D-Man-(1-&gt;2)-alpha-D-Man-(1-&gt;3)-[alpha-D-Man-(1-&gt;2)-alpha-D-Man-(1-&gt;3)-[alpha-D-Man-(1-&gt;2)-alpha-D-Man-(1-&gt;6)]-alpha-D-Man-(1-&gt;6)]-beta-D-Man-(1-&gt;4)-beta-D-GlcNAc-(1-&gt;4)-beta-D-GlcNAc)-L-asparaginyl-[protein] (N-glucan mannose isomer 9A1,2,3B1,2,3) + 4 H2O = N(4)-(alpha-D-Man-(1-&gt;3)-[alpha-D-Man-(1-&gt;3)-[alpha-D-Man-(1-&gt;6)]-alpha-D-Man-(1-&gt;6)]-beta-D-Man-(1-&gt;4)-beta-D-GlcNAc-(1-&gt;4)-beta-D-GlcNAc)-L-asparaginyl-[protein] (N-glucan mannose isomer 5A1,2) + 4 beta-D-mannose. The enzyme catalyses N(4)-(alpha-D-Man-(1-&gt;2)-alpha-D-Man-(1-&gt;2)-alpha-D-Man-(1-&gt;3)-[alpha-D-Man-(1-&gt;3)-[alpha-D-Man-(1-&gt;2)-alpha-D-Man-(1-&gt;6)]-alpha-D-Man-(1-&gt;6)]-beta-D-Man-(1-&gt;4)-beta-D-GlcNAc-(1-&gt;4)-beta-D-GlcNAc)-L-asparaginyl-[protein] (N-glucan mannose isomer 8A1,2,3B1,3) + 3 H2O = N(4)-(alpha-D-Man-(1-&gt;3)-[alpha-D-Man-(1-&gt;3)-[alpha-D-Man-(1-&gt;6)]-alpha-D-Man-(1-&gt;6)]-beta-D-Man-(1-&gt;4)-beta-D-GlcNAc-(1-&gt;4)-beta-D-GlcNAc)-L-asparaginyl-[protein] (N-glucan mannose isomer 5A1,2) + 3 beta-D-mannose. The protein operates within protein modification; protein glycosylation. Functionally, involved in the maturation of Asn-linked oligosaccharides. Progressively trims alpha-1,2-linked mannose residues from Man(9)GlcNAc(2) to produce Man(5)GlcNAc(2). The protein is Probable mannosyl-oligosaccharide alpha-1,2-mannosidase 1B (mns1B) of Neosartorya fischeri (strain ATCC 1020 / DSM 3700 / CBS 544.65 / FGSC A1164 / JCM 1740 / NRRL 181 / WB 181) (Aspergillus fischerianus).